Reading from the N-terminus, the 939-residue chain is Valine--tRNA ligase (939 aa).

Positions 47–57 match the 'HIGH' region motif; that stretch reads PNVTGILHMGH. Positions 563–567 match the 'KMSKS' region motif; it reads KLSKS. An ATP-binding site is contributed by Lys566. Positions 874–939 form a coiled coil; it reads EHLAKERVRL…QSILDKLASL (66 aa).

It belongs to the class-I aminoacyl-tRNA synthetase family. ValS type 1 subfamily. As to quaternary structure, monomer.

It localises to the cytoplasm. It catalyses the reaction tRNA(Val) + L-valine + ATP = L-valyl-tRNA(Val) + AMP + diphosphate. Catalyzes the attachment of valine to tRNA(Val). As ValRS can inadvertently accommodate and process structurally similar amino acids such as threonine, to avoid such errors, it has a 'posttransfer' editing activity that hydrolyzes mischarged Thr-tRNA(Val) in a tRNA-dependent manner. This Chlamydia trachomatis serovar L2b (strain UCH-1/proctitis) protein is Valine--tRNA ligase.